We begin with the raw amino-acid sequence, 708 residues long: Exocyst complex component 5 (708 aa).

At Ala2 the chain carries N-acetylalanine. Positions 40 to 101 (KRLLEEFVNH…AFQHFQELDE (62 aa)) form a coiled coil. Phosphothreonine is present on residues Thr122, Thr395, and Thr405. Ser412 carries the phosphoserine modification.

Belongs to the SEC10 family. The exocyst complex is composed of EXOC1, EXOC2, EXOC3, EXOC4, EXOC5, EXOC6, EXOC7 and EXOC8. Interacts with EXOC3L1.

It is found in the cytoplasm. It localises to the midbody. Functionally, component of the exocyst complex involved in the docking of exocytic vesicles with fusion sites on the plasma membrane. The polypeptide is Exocyst complex component 5 (Exoc5) (Mus musculus (Mouse)).